Consider the following 208-residue polypeptide: Ribosomal RNA large subunit methyltransferase E (208 aa).

5 residues coordinate S-adenosyl-L-methionine: Gly-62, Trp-64, Asp-82, Asp-98, and Asp-123. Catalysis depends on Lys-163, which acts as the Proton acceptor.

Belongs to the class I-like SAM-binding methyltransferase superfamily. RNA methyltransferase RlmE family.

Its subcellular location is the cytoplasm. The enzyme catalyses uridine(2552) in 23S rRNA + S-adenosyl-L-methionine = 2'-O-methyluridine(2552) in 23S rRNA + S-adenosyl-L-homocysteine + H(+). In terms of biological role, specifically methylates the uridine in position 2552 of 23S rRNA at the 2'-O position of the ribose in the fully assembled 50S ribosomal subunit. This Idiomarina loihiensis (strain ATCC BAA-735 / DSM 15497 / L2-TR) protein is Ribosomal RNA large subunit methyltransferase E.